Reading from the N-terminus, the 449-residue chain is Tubulin alpha-1C chain (449 aa).

Residues 1–4 (MREC) carry the MREC motif motif. Q11 provides a ligand contact to GTP. K40 carries the N6-acetyllysine modification. E71, S140, G144, T145, T179, N206, and N228 together coordinate GTP. E71 serves as a coordination point for Mg(2+). E254 is an active-site residue. At Y282 the chain carries 3'-nitrotyrosine. The interval 429 to 449 (EKDYEEVGADSAEGDDEGDEY) is disordered. Positions 431–449 (DYEEVGADSAEGDDEGDEY) are enriched in acidic residues. Y432 is subject to Phosphotyrosine. A Phosphoserine modification is found at S439. Y449 is subject to 3'-nitrotyrosine.

Belongs to the tubulin family. Dimer of alpha and beta chains. A typical microtubule is a hollow water-filled tube with an outer diameter of 25 nm and an inner diameter of 15 nM. Alpha-beta heterodimers associate head-to-tail to form protofilaments running lengthwise along the microtubule wall with the beta-tubulin subunit facing the microtubule plus end conferring a structural polarity. Microtubules usually have 13 protofilaments but different protofilament numbers can be found in some organisms and specialized cells. Requires Mg(2+) as cofactor. Some glutamate residues at the C-terminus are polyglycylated, resulting in polyglycine chains on the gamma-carboxyl group. Glycylation is mainly limited to tubulin incorporated into axonemes (cilia and flagella) whereas glutamylation is prevalent in neuronal cells, centrioles, axonemes, and the mitotic spindle. Both modifications can coexist on the same protein on adjacent residues, and lowering polyglycylation levels increases polyglutamylation, and reciprocally. Cilia and flagella glycylation is required for their stability and maintenance. Flagella glycylation controls sperm motility. Post-translationally, some glutamate residues at the C-terminus are polyglutamylated, resulting in polyglutamate chains on the gamma-carboxyl group. Polyglutamylation plays a key role in microtubule severing by spastin (SPAST). SPAST preferentially recognizes and acts on microtubules decorated with short polyglutamate tails: severing activity by SPAST increases as the number of glutamates per tubulin rises from one to eight, but decreases beyond this glutamylation threshold. Glutamylation is also involved in cilia motility. In terms of processing, acetylation of alpha chains at Lys-40 is located inside the microtubule lumen. This modification has been correlated with increased microtubule stability, intracellular transport and ciliary assembly. Methylation of alpha chains at Lys-40 is found in mitotic microtubules and is required for normal mitosis and cytokinesis contributing to genomic stability. Post-translationally, nitration of Tyr-449 is irreversible and interferes with normal dynein intracellular distribution. In terms of processing, undergoes a tyrosination/detyrosination cycle, the cyclic removal and re-addition of a C-terminal tyrosine residue by the enzymes tubulin tyrosine carboxypeptidase (MATCAP1, VASH1 or VASH2) and tubulin tyrosine ligase (TTL), respectively. Tyrosination promotes microtubule interaction with CAP-Gly domain-containing proteins such as CLIP1, CLIP2 and DCTN1. Tyrosination regulates the initiation of dynein-dynactin motility via interaction with DCTN1, which brings the dynein-dynactin complex into contact with microtubules. In neurons, tyrosinated tubulins mediate the initiation of retrograde vesicle transport. Post-translationally, detyrosination is involved in metaphase plate congression by guiding chromosomes during mitosis: detyrosination promotes interaction with CENPE, promoting pole-proximal transport of chromosomes toward the equator. Detyrosination increases microtubules-dependent mechanotransduction in dystrophic cardiac and skeletal muscle. In cardiomyocytes, detyrosinated microtubules are required to resist to contractile compression during contraction: detyrosination promotes association with desmin (DES) at force-generating sarcomeres, leading to buckled microtubules and mechanical resistance to contraction.

The protein resides in the cytoplasm. Its subcellular location is the cytoskeleton. The catalysed reaction is GTP + H2O = GDP + phosphate + H(+). Its function is as follows. Tubulin is the major constituent of microtubules, a cylinder consisting of laterally associated linear protofilaments composed of alpha- and beta-tubulin heterodimers. Microtubules grow by the addition of GTP-tubulin dimers to the microtubule end, where a stabilizing cap forms. Below the cap, tubulin dimers are in GDP-bound state, owing to GTPase activity of alpha-tubulin. The protein is Tubulin alpha-1C chain (TUBA1C) of Bos taurus (Bovine).